The following is a 275-amino-acid chain: Tryptophan synthase alpha chain (275 aa).

Catalysis depends on glutamate 51, which acts as the Proton acceptor.

This sequence belongs to the TrpA family. Tetramer of two alpha and two beta chains.

The catalysed reaction is (1S,2R)-1-C-(indol-3-yl)glycerol 3-phosphate + L-serine = D-glyceraldehyde 3-phosphate + L-tryptophan + H2O. The protein operates within amino-acid biosynthesis; L-tryptophan biosynthesis; L-tryptophan from chorismate: step 5/5. Functionally, the alpha subunit is responsible for the aldol cleavage of indoleglycerol phosphate to indole and glyceraldehyde 3-phosphate. The sequence is that of Tryptophan synthase alpha chain from Caulobacter vibrioides (strain ATCC 19089 / CIP 103742 / CB 15) (Caulobacter crescentus).